A 480-amino-acid polypeptide reads, in one-letter code: UDP-glucose 6-dehydrogenase 4 (480 aa).

NAD(+) is bound by residues 3–20, aspartate 33, arginine 38, threonine 90, threonine 128, and glutamate 161; that span reads KICCIGAGYVGGPTMAVI. Substrate is bound by residues 157–161, lysine 216, 216–223, 256–269, and glycine 269; these read EFLAE, KLAANAFL, and RIGSKFLNASVGFG. Cysteine 272 (nucleophile) is an active-site residue. Residue lysine 275 coordinates NAD(+). Substrate is bound by residues phenylalanine 334 and lysine 335. Arginine 342 contributes to the NAD(+) binding site. Residue arginine 447 participates in substrate binding.

This sequence belongs to the UDP-glucose/GDP-mannose dehydrogenase family.

The enzyme catalyses UDP-alpha-D-glucose + 2 NAD(+) + H2O = UDP-alpha-D-glucuronate + 2 NADH + 3 H(+). The protein operates within nucleotide-sugar biosynthesis; UDP-alpha-D-glucuronate biosynthesis; UDP-alpha-D-glucuronate from UDP-alpha-D-glucose: step 1/1. With respect to regulation, inhibited by UDP-xylose. Its function is as follows. Involved in the biosynthesis of UDP-glucuronic acid (UDP-GlcA), providing nucleotide sugars for cell-wall polymers. The sequence is that of UDP-glucose 6-dehydrogenase 4 from Arabidopsis thaliana (Mouse-ear cress).